The chain runs to 451 residues: Potassium/sodium uptake protein NtpJ (451 aa).

The next 11 membrane-spanning stretches (helical) occupy residues 18–38 (IAAG…LPFF), 46–66 (HFID…LTTL), 78–98 (FLIM…PILF), 133–153 (ILKF…VVFI), 162–182 (IWFS…DLLG), 192–212 (VYLI…FIVW), 230–250 (VALS…LITE), 293–313 (LILT…AGGL), 350–370 (ALTL…VLSV), 380–400 (IEYI…TMGL), and 410–430 (LVII…VFSL).

It belongs to the TrkH potassium transport family.

It is found in the cell membrane. In terms of biological role, mediates electrogenic transport of potassium as well as sodium. Acts probably as a potassium-sodium cotransporter. Major sodium reentry pathway at high pH values. This Enterococcus hirae (strain ATCC 9790 / DSM 20160 / JCM 8729 / LMG 6399 / NBRC 3181 / NCIMB 6459 / NCDO 1258 / NCTC 12367 / WDCM 00089 / R) protein is Potassium/sodium uptake protein NtpJ (ntpJ).